A 255-amino-acid polypeptide reads, in one-letter code: Sulfate transporter CysZ (255 aa).

4 helical membrane-spanning segments follow: residues 26-46 (LFVL…IYFA), 71-91 (LLWP…FTML), 150-170 (LFIL…WLLF), and 211-231 (IVYL…AAVA).

The protein belongs to the CysZ family.

It is found in the cell inner membrane. Its function is as follows. High affinity, high specificity proton-dependent sulfate transporter, which mediates sulfate uptake. Provides the sulfur source for the cysteine synthesis pathway. This chain is Sulfate transporter CysZ, found in Pseudomonas fluorescens (strain SBW25).